The following is a 25-amino-acid chain: Pregnancy-associated glycoprotein 72 (25 aa).

N-linked (GlcNAc...) asparagine glycans are attached at residues Asn4 and Asn21.

The protein belongs to the peptidase A1 family. N-glycosylated. In terms of tissue distribution, expressed in chorionic epithelium (trophectoderm).

The protein localises to the secreted. The protein resides in the extracellular space. This is Pregnancy-associated glycoprotein 72 from Bison bison (American bison).